Here is a 397-residue protein sequence, read N- to C-terminus: Elongation factor Tu (397 aa).

Residues 10-206 enclose the tr-type G domain; it reads KPHVNIGTIG…EVDAYIPTPE (197 aa). A G1 region spans residues 19-26; sequence GHVDHGKT. 19–26 contributes to the GTP binding site; the sequence is GHVDHGKT. Position 26 (Thr26) interacts with Mg(2+). The G2 stretch occupies residues 60 to 64; it reads GITIN. The G3 stretch occupies residues 81-84; the sequence is DCPG. GTP contacts are provided by residues 81–85 and 136–139; these read DCPGH and NKAD. The interval 136–139 is G4; sequence NKAD. Residues 174 to 176 form a G5 region; sequence SAL.

The protein belongs to the TRAFAC class translation factor GTPase superfamily. Classic translation factor GTPase family. EF-Tu/EF-1A subfamily. As to quaternary structure, monomer.

It localises to the cytoplasm. It carries out the reaction GTP + H2O = GDP + phosphate + H(+). Functionally, GTP hydrolase that promotes the GTP-dependent binding of aminoacyl-tRNA to the A-site of ribosomes during protein biosynthesis. In Clostridium acetobutylicum (strain ATCC 824 / DSM 792 / JCM 1419 / IAM 19013 / LMG 5710 / NBRC 13948 / NRRL B-527 / VKM B-1787 / 2291 / W), this protein is Elongation factor Tu.